The primary structure comprises 684 residues: DNA-directed RNA polymerase subunit beta' (684 aa).

Residues C69, C71, C87, and C90 each coordinate Zn(2+). Positions 491, 493, and 495 each coordinate Mg(2+).

It belongs to the RNA polymerase beta' chain family. RpoC1 subfamily. As to quaternary structure, in plastids the minimal PEP RNA polymerase catalytic core is composed of four subunits: alpha, beta, beta', and beta''. When a (nuclear-encoded) sigma factor is associated with the core the holoenzyme is formed, which can initiate transcription. Mg(2+) is required as a cofactor. The cofactor is Zn(2+).

The protein localises to the plastid. It is found in the chloroplast. The catalysed reaction is RNA(n) + a ribonucleoside 5'-triphosphate = RNA(n+1) + diphosphate. DNA-dependent RNA polymerase catalyzes the transcription of DNA into RNA using the four ribonucleoside triphosphates as substrates. This chain is DNA-directed RNA polymerase subunit beta', found in Phaseolus vulgaris (Kidney bean).